The primary structure comprises 169 residues: Endoribonuclease YbeY (169 aa).

Zn(2+)-binding residues include H126, H130, and H136.

This sequence belongs to the endoribonuclease YbeY family. Requires Zn(2+) as cofactor.

The protein resides in the cytoplasm. Functionally, single strand-specific metallo-endoribonuclease involved in late-stage 70S ribosome quality control and in maturation of the 3' terminus of the 16S rRNA. The protein is Endoribonuclease YbeY of Bradyrhizobium sp. (strain BTAi1 / ATCC BAA-1182).